The following is a 162-amino-acid chain: NADH-quinone oxidoreductase subunit I 2 (162 aa).

4Fe-4S ferredoxin-type domains are found at residues 53-83 (LRRY…IDSE) and 93-122 (TRYD…ETRI). Cysteine 63, cysteine 66, cysteine 69, cysteine 73, cysteine 102, cysteine 105, cysteine 108, and cysteine 112 together coordinate [4Fe-4S] cluster.

It belongs to the complex I 23 kDa subunit family. In terms of assembly, NDH-1 is composed of 14 different subunits. Subunits NuoA, H, J, K, L, M, N constitute the membrane sector of the complex. The cofactor is [4Fe-4S] cluster.

It is found in the cell inner membrane. The catalysed reaction is a quinone + NADH + 5 H(+)(in) = a quinol + NAD(+) + 4 H(+)(out). Its function is as follows. NDH-1 shuttles electrons from NADH, via FMN and iron-sulfur (Fe-S) centers, to quinones in the respiratory chain. The immediate electron acceptor for the enzyme in this species is believed to be ubiquinone. Couples the redox reaction to proton translocation (for every two electrons transferred, four hydrogen ions are translocated across the cytoplasmic membrane), and thus conserves the redox energy in a proton gradient. The sequence is that of NADH-quinone oxidoreductase subunit I 2 from Nitrosococcus oceani (strain ATCC 19707 / BCRC 17464 / JCM 30415 / NCIMB 11848 / C-107).